The primary structure comprises 272 residues: HMP-PP phosphatase (272 aa).

Catalysis depends on aspartate 8, which acts as the Nucleophile. Mg(2+) is bound by residues aspartate 8, aspartate 10, and aspartate 212.

Belongs to the HAD-like hydrolase superfamily. Cof family. Requires Mg(2+) as cofactor.

The catalysed reaction is 4-amino-2-methyl-5-(diphosphooxymethyl)pyrimidine + H2O = 4-amino-2-methyl-5-(phosphooxymethyl)pyrimidine + phosphate + H(+). Catalyzes the hydrolysis of 4-amino-2-methyl-5-hydroxymethylpyrimidine pyrophosphate (HMP-PP) to 4-amino-2-methyl-5-hydroxymethylpyrimidine phosphate (HMP-P). The protein is HMP-PP phosphatase of Salmonella agona (strain SL483).